The sequence spans 342 residues: S-adenosylmethionine:tRNA ribosyltransferase-isomerase (342 aa).

It belongs to the QueA family. As to quaternary structure, monomer.

The protein localises to the cytoplasm. The catalysed reaction is 7-aminomethyl-7-carbaguanosine(34) in tRNA + S-adenosyl-L-methionine = epoxyqueuosine(34) in tRNA + adenine + L-methionine + 2 H(+). It participates in tRNA modification; tRNA-queuosine biosynthesis. Transfers and isomerizes the ribose moiety from AdoMet to the 7-aminomethyl group of 7-deazaguanine (preQ1-tRNA) to give epoxyqueuosine (oQ-tRNA). This Oceanobacillus iheyensis (strain DSM 14371 / CIP 107618 / JCM 11309 / KCTC 3954 / HTE831) protein is S-adenosylmethionine:tRNA ribosyltransferase-isomerase.